Consider the following 459-residue polypeptide: Glutamyl-tRNA reductase (459 aa).

Substrate contacts are provided by residues 49-52 (TCNR), serine 109, 114-116 (EQQ), and glutamine 120. Residue cysteine 50 is the Nucleophile of the active site. Residue 189-194 (GAGAMG) coordinates NADP(+).

It belongs to the glutamyl-tRNA reductase family. As to quaternary structure, homodimer.

It catalyses the reaction (S)-4-amino-5-oxopentanoate + tRNA(Glu) + NADP(+) = L-glutamyl-tRNA(Glu) + NADPH + H(+). It functions in the pathway porphyrin-containing compound metabolism; protoporphyrin-IX biosynthesis; 5-aminolevulinate from L-glutamyl-tRNA(Glu): step 1/2. Catalyzes the NADPH-dependent reduction of glutamyl-tRNA(Glu) to glutamate 1-semialdehyde (GSA). The protein is Glutamyl-tRNA reductase of Mycolicibacterium paratuberculosis (strain ATCC BAA-968 / K-10) (Mycobacterium paratuberculosis).